The sequence spans 229 residues: 7-cyano-7-deazaguanine synthase (229 aa).

15-25 (LSGGLDSATVV) contributes to the ATP binding site. C194, C204, C207, and C210 together coordinate Zn(2+).

This sequence belongs to the QueC family. Zn(2+) is required as a cofactor.

It catalyses the reaction 7-carboxy-7-deazaguanine + NH4(+) + ATP = 7-cyano-7-deazaguanine + ADP + phosphate + H2O + H(+). The protein operates within purine metabolism; 7-cyano-7-deazaguanine biosynthesis. Its function is as follows. Catalyzes the ATP-dependent conversion of 7-carboxy-7-deazaguanine (CDG) to 7-cyano-7-deazaguanine (preQ(0)). The chain is 7-cyano-7-deazaguanine synthase from Pseudomonas savastanoi pv. phaseolicola (strain 1448A / Race 6) (Pseudomonas syringae pv. phaseolicola (strain 1448A / Race 6)).